Reading from the N-terminus, the 140-residue chain is MVLLRSLFILQVLVRMGLTYNFSNCNFTSITKIYCNIIFHDLTGDLKGAKFEQIEDCESKPACLLKIEYYTLNPIPGCPSLPDKTFARRTREALNDHCPGYPETERNDGTQEMAQEVQNICLNQTSQILRLWYSFMQSPE.

A signal peptide spans 1–19 (MVLLRSLFILQVLVRMGLT). Asn-21 and Asn-26 each carry an N-linked (GlcNAc...) asparagine glycan. Cystine bridges form between Cys-25–Cys-98, Cys-57–Cys-63, and Cys-78–Cys-121. An N-linked (GlcNAc...) asparagine glycan is attached at Asn-123.

Interacts with a receptor composed of CRLF2 and IL7R. Binding of TSLP to CRLF2/TSLPR is a mechanistic prerequisite for recruitment of IL7R to the high-affinity ternary complex.

Its subcellular location is the secreted. Functionally, cytokine that induces the release of T-cell-attracting chemokines from monocytes and, in particular, enhances the maturation of CD11c(+) dendritic cells. Can induce allergic inflammation by directly activating mast cells. The protein is Thymic stromal lymphopoietin (Tslp) of Mus musculus (Mouse).